A 345-amino-acid chain; its full sequence is Fructose-1,6-bisphosphatase class 1 1 (345 aa).

4 residues coordinate Mg(2+): Glu90, Asp109, Leu111, and Asp112. Substrate is bound by residues Asp112–Ser115 and Asn200. Mg(2+) is bound at residue Glu272.

This sequence belongs to the FBPase class 1 family. In terms of assembly, homotetramer. Mg(2+) is required as a cofactor.

The protein resides in the cytoplasm. The catalysed reaction is beta-D-fructose 1,6-bisphosphate + H2O = beta-D-fructose 6-phosphate + phosphate. Its pathway is carbohydrate biosynthesis; gluconeogenesis. In Nitrobacter hamburgensis (strain DSM 10229 / NCIMB 13809 / X14), this protein is Fructose-1,6-bisphosphatase class 1 1.